A 152-amino-acid polypeptide reads, in one-letter code: MIKVVRAKLHGITVTGADLNYHGSITLDPEICAQAGIYPMEFVEIWNRNSGARISTYVIFGEPGSGCCILNGAAARTCQRGDVIIIAASEYTTPDRLYTLKPRILTFTAGNRVDRVLRYDVFKGPDRAFDFRTLDITAGEDAAALEPVPILD.

The Schiff-base intermediate with substrate; via pyruvic acid role is filled by S24. S24 bears the Pyruvic acid (Ser) mark. T56 is a substrate binding site. Residue Y57 is the Proton donor of the active site. 72–74 is a binding site for substrate; that stretch reads GAA.

Belongs to the PanD family. As to quaternary structure, heterooctamer of four alpha and four beta subunits. It depends on pyruvate as a cofactor. Is synthesized initially as an inactive proenzyme, which is activated by self-cleavage at a specific serine bond to produce a beta-subunit with a hydroxyl group at its C-terminus and an alpha-subunit with a pyruvoyl group at its N-terminus.

It is found in the cytoplasm. The catalysed reaction is L-aspartate + H(+) = beta-alanine + CO2. The protein operates within cofactor biosynthesis; (R)-pantothenate biosynthesis; beta-alanine from L-aspartate: step 1/1. Catalyzes the pyruvoyl-dependent decarboxylation of aspartate to produce beta-alanine. This Rhodospirillum centenum (strain ATCC 51521 / SW) protein is Aspartate 1-decarboxylase.